Consider the following 31-residue polypeptide: Cytochrome b6-f complex subunit 6 (31 aa).

A helical transmembrane segment spans residues 4–24; sequence ITSYFGFLLAVLIITSSLFIG.

It belongs to the PetL family. The 4 large subunits of the cytochrome b6-f complex are cytochrome b6, subunit IV (17 kDa polypeptide, PetD), cytochrome f and the Rieske protein, while the 4 small subunits are PetG, PetL, PetM and PetN. The complex functions as a dimer.

The protein localises to the plastid. Its subcellular location is the chloroplast thylakoid membrane. Its function is as follows. Component of the cytochrome b6-f complex, which mediates electron transfer between photosystem II (PSII) and photosystem I (PSI), cyclic electron flow around PSI, and state transitions. PetL is important for photoautotrophic growth as well as for electron transfer efficiency and stability of the cytochrome b6-f complex. In Phaseolus vulgaris (Kidney bean), this protein is Cytochrome b6-f complex subunit 6.